The following is a 241-amino-acid chain: Phosphoribosylaminoimidazole-succinocarboxamide synthase (241 aa).

The protein belongs to the SAICAR synthetase family.

It carries out the reaction 5-amino-1-(5-phospho-D-ribosyl)imidazole-4-carboxylate + L-aspartate + ATP = (2S)-2-[5-amino-1-(5-phospho-beta-D-ribosyl)imidazole-4-carboxamido]succinate + ADP + phosphate + 2 H(+). It functions in the pathway purine metabolism; IMP biosynthesis via de novo pathway; 5-amino-1-(5-phospho-D-ribosyl)imidazole-4-carboxamide from 5-amino-1-(5-phospho-D-ribosyl)imidazole-4-carboxylate: step 1/2. This chain is Phosphoribosylaminoimidazole-succinocarboxamide synthase, found in Latilactobacillus sakei subsp. sakei (strain 23K) (Lactobacillus sakei subsp. sakei).